The following is a 114-amino-acid chain: Probable non-functional T cell receptor beta variable 5-7 (114 aa).

The signal sequence occupies residues 1–21; the sequence is MGPGLLCWVLLCPLGEGPVDA. An Ig-like domain is found at 22-114; that stretch reads GVTQSPTHLI…SALYLCASSL (93 aa). Residues Cys-42 and Cys-110 are joined by a disulfide bond. The N-linked (GlcNAc...) asparagine glycan is linked to Asn-90.

As to quaternary structure, alpha-beta TR is a heterodimer composed of an alpha and beta chain; disulfide-linked. The alpha-beta TR is associated with the transmembrane signaling CD3 coreceptor proteins to form the TR-CD3 (TcR or TCR). The assembly of alpha-beta TR heterodimers with CD3 occurs in the endoplasmic reticulum where a single alpha-beta TR heterodimer associates with one CD3D-CD3E heterodimer, one CD3G-CD3E heterodimer and one CD247 homodimer forming a stable octameric structure. CD3D-CD3E and CD3G-CD3E heterodimers preferentially associate with TR alpha and TR beta chains, respectively. The association of the CD247 homodimer is the last step of TcR assembly in the endoplasmic reticulum and is required for transport to the cell surface.

It localises to the cell membrane. Probable non-functional open reading frame (ORF) of V region of the variable domain of T cell receptor (TR) beta chain. Non-functional ORF generally cannot participate in the synthesis of a productive T cell receptor (TR) chain due to altered V-(D)-J or switch recombination and/or splicing site (at mRNA level) and/or conserved amino acid change (protein level). Alpha-beta T cell receptors are antigen specific receptors which are essential to the immune response and are present on the cell surface of T lymphocytes. Recognize peptide-major histocompatibility (MH) (pMH) complexes that are displayed by antigen presenting cells (APC), a prerequisite for efficient T cell adaptive immunity against pathogens. Binding of alpha-beta TR to pMH complex initiates TR-CD3 clustering on the cell surface and intracellular activation of LCK that phosphorylates the ITAM motifs of CD3G, CD3D, CD3E and CD247 enabling the recruitment of ZAP70. In turn ZAP70 phosphorylates LAT, which recruits numerous signaling molecules to form the LAT signalosome. The LAT signalosome propagates signal branching to three major signaling pathways, the calcium, the mitogen-activated protein kinase (MAPK) kinase and the nuclear factor NF-kappa-B (NF-kB) pathways, leading to the mobilization of transcription factors that are critical for gene expression and essential for T cell growth and differentiation. The T cell repertoire is generated in the thymus, by V-(D)-J rearrangement. This repertoire is then shaped by intrathymic selection events to generate a peripheral T cell pool of self-MH restricted, non-autoaggressive T cells. Post-thymic interaction of alpha-beta TR with the pMH complexes shapes TR structural and functional avidity. This is Probable non-functional T cell receptor beta variable 5-7 from Homo sapiens (Human).